A 426-amino-acid polypeptide reads, in one-letter code: Citrate synthase (426 aa).

Active-site residues include His314 and Asp372.

It belongs to the citrate synthase family.

The catalysed reaction is oxaloacetate + acetyl-CoA + H2O = citrate + CoA + H(+). The protein operates within carbohydrate metabolism; tricarboxylic acid cycle; isocitrate from oxaloacetate: step 1/2. This is Citrate synthase (gltA) from Helicobacter pylori (strain J99 / ATCC 700824) (Campylobacter pylori J99).